We begin with the raw amino-acid sequence, 533 residues long: Tryptophan N-monooxygenase CYP79A68 (533 aa).

Residues 12-32 traverse the membrane as a helical segment; sequence VTPPISLSLAFIIFMFLVKFI. N-linked (GlcNAc...) asparagine glycosylation is present at Asn209. Cys471 is a binding site for heme.

Belongs to the cytochrome P450 family. Heme is required as a cofactor. As to expression, confined to buds.

The protein localises to the membrane. It catalyses the reaction L-tryptophan + 2 reduced [NADPH--hemoprotein reductase] + 2 O2 = (E)-(indol-3-yl)acetaldehyde oxime + 2 oxidized [NADPH--hemoprotein reductase] + CO2 + 3 H2O + 2 H(+). Catalyzes with low efficiency E and Z isomers of indole-3-acetaldoxime from tryptophan (Trp). The polypeptide is Tryptophan N-monooxygenase CYP79A68 (Prunus mume (Japanese apricot)).